The following is a 426-amino-acid chain: Serine protease HTRA2, mitochondrial (426 aa).

The transit peptide at 1–30 directs the protein to the mitochondrion; sequence MALRGSHRLDDFIRRCSALTLFHSQAPSRR. The segment at 30–59 is disordered; that stretch reads RVSHCGRDRRQQQDPPGQGRQEQQESGGGH. A propeptide spanning residues 31 to 78 is cleaved from the precursor; that stretch reads VSHCGRDRRQQQDPPGQGRQEQQESGGGHWSRFGWRSLIRFFVPFSLG. Over residues 42–54 the composition is skewed to low complexity; that stretch reads QDPPGQGRQEQQE. The helical transmembrane segment at 68-86 threads the bilayer; that stretch reads LIRFFVPFSLGAVASSLVI. The short motif at 79 to 82 is the IAP-binding element; sequence AVAS. Residues 143–306 form a serine protease region; sequence SNGSGFIIEQ…IPIDYVKVFL (164 aa). Catalysis depends on charge relay system residues His161, Asp193, and Ser270. Residues 329–414 enclose the PDZ domain; the sequence is MGITMLTLTP…HLDIVILRGV (86 aa).

This sequence belongs to the peptidase S1C family. In terms of assembly, interacts with th/DIAP1 (via BIR 2 domain).

It is found in the mitochondrion intermembrane space. It localises to the mitochondrion membrane. The enzyme catalyses Cleavage of non-polar aliphatic amino-acids at the P1 position, with a preference for Val, Ile and Met. At the P2 and P3 positions, Arg is selected most strongly with a secondary preference for other hydrophilic residues.. Functionally, serine protease that shows proteolytic activity against a non-specific substrate beta-casein. Promotes or induces cell death either by direct binding to and inhibition of BIRC proteins (also called inhibitor of apoptosis proteins, IAPs), leading to an increase in caspase activity, or by a BIRC inhibition-independent, caspase-independent and serine protease activity-dependent mechanism. Can antagonize antiapoptotic activity of th/Diap1 by directly inducing the degradation of th/Diap1. The protein is Serine protease HTRA2, mitochondrial of Drosophila ananassae (Fruit fly).